Consider the following 62-residue polypeptide: ATP synthase subunit epsilon, mitochondrial (62 aa).

At Thr-52 the chain carries Phosphothreonine.

This sequence belongs to the eukaryotic ATPase epsilon family. In terms of assembly, F-type ATPases have 2 components, CF(1) - the catalytic core - and CF(0) - the membrane proton channel. CF(1) has five subunits: alpha(3), beta(3), gamma(1), delta(1), epsilon(1). CF(0) has three main subunits: a, b and c.

It localises to the mitochondrion. The protein resides in the mitochondrion inner membrane. Mitochondrial membrane ATP synthase (F(1)F(0) ATP synthase or Complex V) produces ATP from ADP in the presence of a proton gradient across the membrane which is generated by electron transport complexes of the respiratory chain. F-type ATPases consist of two structural domains, F(1) - containing the extramembraneous catalytic core, and F(0) - containing the membrane proton channel, linked together by a central stalk and a peripheral stalk. During catalysis, ATP synthesis in the catalytic domain of F(1) is coupled via a rotary mechanism of the central stalk subunits to proton translocation. Part of the complex F(1) domain and of the central stalk which is part of the complex rotary element. Rotation of the central stalk against the surrounding alpha(3)beta(3) subunits leads to hydrolysis of ATP in three separate catalytic sites on the beta subunits. The protein is ATP synthase subunit epsilon, mitochondrial (ATP15) of Saccharomyces cerevisiae (strain ATCC 204508 / S288c) (Baker's yeast).